The primary structure comprises 351 residues: Dihydroorotate dehydrogenase (quinone) (351 aa).

FMN is bound by residues 61-65 (AGLDK) and Thr85. A substrate-binding site is contributed by Lys65. Substrate is bound at residue 110–114 (NRMGF). FMN-binding residues include Asn139 and Asn172. Asn172 serves as a coordination point for substrate. The Nucleophile role is filled by Ser175. Asn177 lines the substrate pocket. FMN contacts are provided by Lys217 and Thr245. Position 246-247 (246-247 (NT)) interacts with substrate. FMN-binding positions include Gly268, Gly297, and 318–319 (YS).

This sequence belongs to the dihydroorotate dehydrogenase family. Type 2 subfamily. Monomer. FMN is required as a cofactor.

It localises to the cell membrane. It carries out the reaction (S)-dihydroorotate + a quinone = orotate + a quinol. It participates in pyrimidine metabolism; UMP biosynthesis via de novo pathway; orotate from (S)-dihydroorotate (quinone route): step 1/1. Its function is as follows. Catalyzes the conversion of dihydroorotate to orotate with quinone as electron acceptor. This chain is Dihydroorotate dehydrogenase (quinone), found in Xanthomonas axonopodis pv. citri (strain 306).